The chain runs to 424 residues: Histidine--tRNA ligase (424 aa).

The disordered stretch occupies residues 1 to 22; the sequence is MSYRRPKGTYDVYPGDAARQEP.

It belongs to the class-II aminoacyl-tRNA synthetase family. Homodimer.

It is found in the cytoplasm. It catalyses the reaction tRNA(His) + L-histidine + ATP = L-histidyl-tRNA(His) + AMP + diphosphate + H(+). This chain is Histidine--tRNA ligase, found in Rubrobacter xylanophilus (strain DSM 9941 / JCM 11954 / NBRC 16129 / PRD-1).